The chain runs to 160 residues: Protein-export protein SecB (160 aa).

It belongs to the SecB family. In terms of assembly, homotetramer, a dimer of dimers. One homotetramer interacts with 1 SecA dimer.

It localises to the cytoplasm. One of the proteins required for the normal export of preproteins out of the cell cytoplasm. It is a molecular chaperone that binds to a subset of precursor proteins, maintaining them in a translocation-competent state. It also specifically binds to its receptor SecA. This is Protein-export protein SecB from Rhizobium etli (strain ATCC 51251 / DSM 11541 / JCM 21823 / NBRC 15573 / CFN 42).